Reading from the N-terminus, the 254-residue chain is 5'/3'-nucleotidase SurE (254 aa).

Positions 9, 10, 40, and 93 each coordinate a divalent metal cation.

This sequence belongs to the SurE nucleotidase family. A divalent metal cation is required as a cofactor.

The protein localises to the cytoplasm. It catalyses the reaction a ribonucleoside 5'-phosphate + H2O = a ribonucleoside + phosphate. The catalysed reaction is a ribonucleoside 3'-phosphate + H2O = a ribonucleoside + phosphate. It carries out the reaction [phosphate](n) + H2O = [phosphate](n-1) + phosphate + H(+). In terms of biological role, nucleotidase with a broad substrate specificity as it can dephosphorylate various ribo- and deoxyribonucleoside 5'-monophosphates and ribonucleoside 3'-monophosphates with highest affinity to 3'-AMP. Also hydrolyzes polyphosphate (exopolyphosphatase activity) with the preference for short-chain-length substrates (P20-25). Might be involved in the regulation of dNTP and NTP pools, and in the turnover of 3'-mononucleotides produced by numerous intracellular RNases (T1, T2, and F) during the degradation of various RNAs. This is 5'/3'-nucleotidase SurE from Photorhabdus laumondii subsp. laumondii (strain DSM 15139 / CIP 105565 / TT01) (Photorhabdus luminescens subsp. laumondii).